We begin with the raw amino-acid sequence, 472 residues long: Tyrosine--tRNA ligase, mitochondrial (472 aa).

Tyrosine 72 serves as a coordination point for L-tyrosine. Residue aspartate 76 coordinates ATP. Residues 77–86 (PTGDSLHVGH) carry the 'HIGH' region motif. L-tyrosine contacts are provided by aspartate 116, tyrosine 216, glutamine 220, aspartate 223, and glutamine 242. Positions 269 and 279 each coordinate ATP. The short motif at 276–280 (KLGKS) is the 'KMSKS' region element. 2 positions are modified to N6-acetyllysine: lysine 350 and lysine 362.

The protein belongs to the class-I aminoacyl-tRNA synthetase family. In terms of assembly, homodimer.

It is found in the mitochondrion matrix. It carries out the reaction tRNA(Tyr) + L-tyrosine + ATP = L-tyrosyl-tRNA(Tyr) + AMP + diphosphate + H(+). Catalyzes the attachment of tyrosine to tRNA(Tyr) in a two-step reaction: tyrosine is first activated by ATP to form Tyr-AMP and then transferred to the acceptor end of tRNA(Tyr). This chain is Tyrosine--tRNA ligase, mitochondrial (Yars2), found in Mus musculus (Mouse).